A 135-amino-acid chain; its full sequence is Fatty acid-binding protein 5 (135 aa).

N-acetylalanine is present on Ala-2. The residue at position 3 (Ser-3) is a Phosphoserine. The Nuclear localization signal signature appears at 24–34 (KELGVGLALRK). Residues Cys-43 and Arg-109 each contribute to the N-eicosanoyl ethanolamine site. An intrachain disulfide couples Cys-120 to Cys-127. 129–131 (RVY) is a (9Z,12Z)-octadecadienoate binding site. An N-eicosanoyl ethanolamine-binding site is contributed by Tyr-131. Tyr-131 lines the hexadecanoate pocket. Tyr-131 carries the phosphotyrosine modification.

Belongs to the calycin superfamily. Fatty-acid binding protein (FABP) family. As to quaternary structure, monomer.

It localises to the cytoplasm. The protein localises to the nucleus. The protein resides in the synapse. Its subcellular location is the postsynaptic density. It is found in the secreted. It carries out the reaction hexadecanoate(out) = hexadecanoate(in). The catalysed reaction is (9Z,12Z)-octadecadienoate(out) = (9Z,12Z)-octadecadienoate(in). It catalyses the reaction (9Z)-octadecenoate(out) = (9Z)-octadecenoate(in). Functionally, intracellular carrier for long-chain fatty acids and related active lipids, such as endocannabinoids, that regulate the metabolism and actions of the ligands they bind. In addition to the cytosolic transport, selectively delivers specific fatty acids from the cytosol to the nucleus, wherein they activate nuclear receptors. Delivers retinoic acid to the nuclear receptor peroxisome proliferator-activated receptor delta; which promotes proliferation and survival. May also serve as a synaptic carrier of endocannabinoid at central synapses and thus controls retrograde endocannabinoid signaling. Modulates inflammation by regulating PTGES induction via NF-kappa-B activation, and prostaglandin E2 (PGE2) biosynthesis during inflammation. This chain is Fatty acid-binding protein 5, found in Rattus norvegicus (Rat).